Reading from the N-terminus, the 198-residue chain is Glycerol-3-phosphate acyltransferase (198 aa).

The next 5 membrane-spanning stretches (helical) occupy residues 5 to 25, 56 to 76, 84 to 104, 114 to 134, and 158 to 178; these read LILL…LWIG, SIVT…PFFF, FWLL…FAGF, AGVI…VFLV, and LFMG…FVIW.

Belongs to the PlsY family. In terms of assembly, probably interacts with PlsX.

Its subcellular location is the cell membrane. It catalyses the reaction an acyl phosphate + sn-glycerol 3-phosphate = a 1-acyl-sn-glycero-3-phosphate + phosphate. Its pathway is lipid metabolism; phospholipid metabolism. Functionally, catalyzes the transfer of an acyl group from acyl-phosphate (acyl-PO(4)) to glycerol-3-phosphate (G3P) to form lysophosphatidic acid (LPA). This enzyme utilizes acyl-phosphate as fatty acyl donor, but not acyl-CoA or acyl-ACP. The chain is Glycerol-3-phosphate acyltransferase from Listeria monocytogenes serovar 1/2a (strain ATCC BAA-679 / EGD-e).